Reading from the N-terminus, the 409-residue chain is Gamma-glutamyl phosphate reductase (409 aa).

Belongs to the gamma-glutamyl phosphate reductase family.

The protein resides in the cytoplasm. The catalysed reaction is L-glutamate 5-semialdehyde + phosphate + NADP(+) = L-glutamyl 5-phosphate + NADPH + H(+). It functions in the pathway amino-acid biosynthesis; L-proline biosynthesis; L-glutamate 5-semialdehyde from L-glutamate: step 2/2. Catalyzes the NADPH-dependent reduction of L-glutamate 5-phosphate into L-glutamate 5-semialdehyde and phosphate. The product spontaneously undergoes cyclization to form 1-pyrroline-5-carboxylate. This is Gamma-glutamyl phosphate reductase from Mycobacterium leprae (strain TN).